Here is a 721-residue protein sequence, read N- to C-terminus: Teichoic acid poly(glycerol phosphate) polymerase (721 aa).

Residues 443–447 (WHGTP), R511, 545–546 (PT), 582–584 (RMH), 624–625 (SS), and D629 contribute to the CDP-glycerol site.

This sequence belongs to the CDP-glycerol glycerophosphotransferase family.

It is found in the cell membrane. It catalyses the reaction 4-O-[(2R)-glycerylphospho]-N-acetyl-beta-D-mannosaminyl-(1-&gt;4)-N-acetyl-alpha-D-glucosaminyl di-trans,octa-cis-undecaprenyl diphosphate + n CDP-glycerol = 4-O-{[(2R)-1-glycerylphospho](n)-(2R)-1-glycerylphospho}-N-acetyl-beta-D-mannosaminyl-(1-&gt;4)-N-acetyl-alpha-D-glucosaminyl undecaprenyl diphosphate + n CMP + n H(+). The protein operates within cell wall biogenesis; poly(glycerol phosphate) teichoic acid biosynthesis. Responsible for the polymerization of the main chain of the major teichoic acid by sequential transfer of glycerol phosphate units from CDP-glycerol to the disaccharide linkage unit. Synthesizes polymers of approximately 35 glycerol phosphate units in length. This is Teichoic acid poly(glycerol phosphate) polymerase from Staphylococcus epidermidis (strain ATCC 35984 / DSM 28319 / BCRC 17069 / CCUG 31568 / BM 3577 / RP62A).